The following is a 131-amino-acid chain: Profilin-1 (131 aa).

The protein belongs to the profilin family. Occurs in many kinds of cells as a complex with monomeric actin in a 1:1 ratio.

The protein resides in the cytoplasm. Its subcellular location is the cytoskeleton. Its function is as follows. Binds to actin and affects the structure of the cytoskeleton. At high concentrations, profilin prevents the polymerization of actin, whereas it enhances it at low concentrations. By binding to PIP2, it inhibits the formation of IP3 and DG. This chain is Profilin-1 (PRO1), found in Triticum aestivum (Wheat).